Here is a 562-residue protein sequence, read N- to C-terminus: Acetolactate synthase isozyme 1 large subunit (562 aa).

Glu-60 serves as a coordination point for thiamine diphosphate. FAD is bound by residues Arg-162, 264 to 285 (HGVRSTNYILQEADLLIVLGAR), and 307 to 326 (DIDRAELGKIKQPHVAIQAD). Residues 393–473 (QHQMWTAQAY…VKIILMNNEA (81 aa)) are thiamine pyrophosphate binding. Residues Asp-444 and Asn-471 each contribute to the Mg(2+) site.

Belongs to the TPP enzyme family. In terms of assembly, dimer of large and small chains. Mg(2+) is required as a cofactor. Requires thiamine diphosphate as cofactor.

The enzyme catalyses 2 pyruvate + H(+) = (2S)-2-acetolactate + CO2. It participates in amino-acid biosynthesis; L-isoleucine biosynthesis; L-isoleucine from 2-oxobutanoate: step 1/4. The protein operates within amino-acid biosynthesis; L-valine biosynthesis; L-valine from pyruvate: step 1/4. This Escherichia coli (strain K12) protein is Acetolactate synthase isozyme 1 large subunit (ilvB).